Consider the following 302-residue polypeptide: Spermidine synthase (302 aa).

Met-1 bears the N-acetylmethionine mark. The region spanning 18–253 is the PABS domain; it reads EGWFRETCSL…GQIGFMLCSK (236 aa). Gln-49 is an S-adenosyl 3-(methylsulfanyl)propylamine binding site. A putrescine-binding site is contributed by Tyr-79. S-adenosyl 3-(methylsulfanyl)propylamine contacts are provided by residues Gln-80, Asp-104, Glu-124, 155–156, and Asp-173; that span reads DG. Asp-173 acts as the Proton acceptor in catalysis. Putrescine-binding positions include 173–176 and Tyr-241; that span reads DSSD.

It belongs to the spermidine/spermine synthase family. Homodimer or homotetramer.

It catalyses the reaction S-adenosyl 3-(methylsulfanyl)propylamine + putrescine = S-methyl-5'-thioadenosine + spermidine + H(+). It participates in amine and polyamine biosynthesis; spermidine biosynthesis; spermidine from putrescine: step 1/1. The activity is thought to be regulated mainly by the availability of decarboxylated S-adenosylmethionine. Its function is as follows. Catalyzes the production of spermidine from putrescine and decarboxylated S-adenosylmethionine (dcSAM). Has a strong preference for putrescine as substrate, and has very low activity towards 1,3-diaminopropane. Has extremely low activity towards spermidine. The polypeptide is Spermidine synthase (Srm) (Mus musculus (Mouse)).